Reading from the N-terminus, the 91-residue chain is Acyl carrier protein (91 aa).

A Carrier domain is found at 6–81; sequence EEIIAELGQI…DIVAYIQKLE (76 aa). Serine 41 bears the O-(pantetheine 4'-phosphoryl)serine mark.

Belongs to the acyl carrier protein (ACP) family. Post-translationally, 4'-phosphopantetheine is transferred from CoA to a specific serine of apo-ACP by AcpS. This modification is essential for activity because fatty acids are bound in thioester linkage to the sulfhydryl of the prosthetic group.

Its subcellular location is the cytoplasm. Its pathway is lipid metabolism; fatty acid biosynthesis. In terms of biological role, carrier of the growing fatty acid chain in fatty acid biosynthesis. The protein is Acyl carrier protein of Rhodococcus erythropolis (strain PR4 / NBRC 100887).